Reading from the N-terminus, the 189-residue chain is Cytidylate kinase (189 aa).

ATP is bound at residue 7 to 15 (GPPGSGKTS).

The protein belongs to the cytidylate kinase family. Type 2 subfamily.

It is found in the cytoplasm. It catalyses the reaction CMP + ATP = CDP + ADP. It carries out the reaction dCMP + ATP = dCDP + ADP. The chain is Cytidylate kinase from Saccharolobus islandicus (strain Y.N.15.51 / Yellowstone #2) (Sulfolobus islandicus).